The sequence spans 437 residues: Serine--tRNA ligase (437 aa).

244–246 (TAE) is an L-serine binding site. 275–277 (RSE) provides a ligand contact to ATP. E298 provides a ligand contact to L-serine. 362-365 (EISS) lines the ATP pocket. S397 serves as a coordination point for L-serine.

Belongs to the class-II aminoacyl-tRNA synthetase family. Type-1 seryl-tRNA synthetase subfamily. As to quaternary structure, homodimer. The tRNA molecule binds across the dimer.

It localises to the cytoplasm. The catalysed reaction is tRNA(Ser) + L-serine + ATP = L-seryl-tRNA(Ser) + AMP + diphosphate + H(+). It carries out the reaction tRNA(Sec) + L-serine + ATP = L-seryl-tRNA(Sec) + AMP + diphosphate + H(+). It functions in the pathway aminoacyl-tRNA biosynthesis; selenocysteinyl-tRNA(Sec) biosynthesis; L-seryl-tRNA(Sec) from L-serine and tRNA(Sec): step 1/1. Its function is as follows. Catalyzes the attachment of serine to tRNA(Ser). Is also able to aminoacylate tRNA(Sec) with serine, to form the misacylated tRNA L-seryl-tRNA(Sec), which will be further converted into selenocysteinyl-tRNA(Sec). The protein is Serine--tRNA ligase of Nitrosomonas europaea (strain ATCC 19718 / CIP 103999 / KCTC 2705 / NBRC 14298).